The primary structure comprises 377 residues: UPF0754 membrane protein lwe2241 (377 aa).

A run of 2 helical transmembrane segments spans residues 1–21 (MSVLFTILLMAVIGGFIGAMT) and 357–377 (YLGGILGGFIGVIQGILAIWI).

The protein belongs to the UPF0754 family.

The protein resides in the cell membrane. The sequence is that of UPF0754 membrane protein lwe2241 from Listeria welshimeri serovar 6b (strain ATCC 35897 / DSM 20650 / CCUG 15529 / CIP 8149 / NCTC 11857 / SLCC 5334 / V8).